Here is a 64-residue protein sequence, read N- to C-terminus: Conotoxin Pn-B01122 (64 aa).

The first 22 residues, methionine 1–alanine 22, serve as a signal peptide directing secretion. Positions arginine 23–asparagine 48 are excised as a propeptide.

The protein belongs to the conotoxin T superfamily. Post-translationally, contains 2 disulfide bonds that can be either 'C1-C3, C2-C4' or 'C1-C4, C2-C3', since these disulfide connectivities have been observed for conotoxins with cysteine framework V (for examples, see AC P0DQQ7 and AC P81755). As to expression, expressed by the venom duct.

The protein resides in the secreted. The protein is Conotoxin Pn-B01122 of Conus pennaceus (Feathered cone).